A 52-amino-acid polypeptide reads, in one-letter code: ATP synthase F(0) complex subunit 8 (52 aa).

A helical membrane pass occupies residues 10–30 (LMTHLWAWLMLYLTTQKIKTF).

Belongs to the ATPase protein 8 family. In terms of assembly, component of the ATP synthase complex composed at least of ATP5F1A/subunit alpha, ATP5F1B/subunit beta, ATP5MC1/subunit c (homooctomer), MT-ATP6/subunit a, MT-ATP8/subunit 8, ATP5ME/subunit e, ATP5MF/subunit f, ATP5MG/subunit g, ATP5MK/subunit k, ATP5MJ/subunit j, ATP5F1C/subunit gamma, ATP5F1D/subunit delta, ATP5F1E/subunit epsilon, ATP5PF/subunit F6, ATP5PB/subunit b, ATP5PD/subunit d, ATP5PO/subunit OSCP. ATP synthase complex consists of a soluble F(1) head domain (subunits alpha(3) and beta(3)) - the catalytic core - and a membrane F(0) domain - the membrane proton channel (subunits c, a, 8, e, f, g, k and j). These two domains are linked by a central stalk (subunits gamma, delta, and epsilon) rotating inside the F1 region and a stationary peripheral stalk (subunits F6, b, d, and OSCP).

It localises to the mitochondrion membrane. Its function is as follows. Subunit 8, of the mitochondrial membrane ATP synthase complex (F(1)F(0) ATP synthase or Complex V) that produces ATP from ADP in the presence of a proton gradient across the membrane which is generated by electron transport complexes of the respiratory chain. ATP synthase complex consist of a soluble F(1) head domain - the catalytic core - and a membrane F(1) domain - the membrane proton channel. These two domains are linked by a central stalk rotating inside the F(1) region and a stationary peripheral stalk. During catalysis, ATP synthesis in the catalytic domain of F(1) is coupled via a rotary mechanism of the central stalk subunits to proton translocation. In vivo, can only synthesize ATP although its ATP hydrolase activity can be activated artificially in vitro. Part of the complex F(0) domain. The sequence is that of ATP synthase F(0) complex subunit 8 from Lycodon semicarinatus (Ryukyu odd-tooth snake).